The primary structure comprises 101 residues: AKKRSRSRKRSASRKRSRSRKRSASKKSSKKHVRKALAAGMKNHLLAHPKGSNNFILAKKKAPRRRRRVAKKVKKAPPKARRRVRVAKSRRSRTARSRRRR.

2 stretches are compositionally biased toward basic residues: residues 1 to 35 and 58 to 101; these read AKKR…HVRK and AKKK…RRRR. Positions 1–101 are disordered; it reads AKKRSRSRKR…SRTARSRRRR (101 aa). Repeat copies occupy residues 3–4, 5–6, 7–8, and 9–10. The segment at 3–22 is 10 X 2 AA approximate tandem repeats of [SK]-R; it reads KRSRSRKRSASRKRSRSRKR. Residues 11–12 form a 5; approximate repeat; it reads SA. 5 repeat units span residues 13–14, 15–16, 17–18, 19–20, and 21–22. Residues 32-65 are globular; it reads HVRKALAAGMKNHLLAHPKGSNNFILAKKKAPRR.

As to expression, sperm.

The protein resides in the nucleus. The protein localises to the chromosome. This chain is Histone H1-like protein EM6, found in Ensis minor (Razor shell).